The primary structure comprises 373 residues: MSDNSKTRVVVGMSGGVDSSVTALLLKEQGYDVIGIFMKNWDDTDENGVCTATEDYKDVVAVADQIGIPYYSVNFEKEYWDRVFEYFLAEYRAGRTPNPDVMCNKEIKFKAFLDYAMTLGADYVATGHYARVARDEDGTVHMLRGVDNGKDQTYFLSQLSQEQLQKTMFPLGHLEKPEVRRLAEEAGLATAKKKDSTGICFIGEKNFKNLLSNYLPAQPGRMMTVDGRDMGEHAGLMYYTIGQRGGLGIGGQHGGDNAPWFVVGKDLSKNILYVGQGFYHDSLMSTSLEASQVHFTREMPEEFTLECTAKFRYRQPDSKVTVHVKGDKAEVIFAEPQRAITPGQAVVFYDGEECLGGGLIDNAYRDGQVCQYI.

Residues 12 to 19 (GMSGGVDS) and M38 each bind ATP. The tract at residues 98 to 100 (NPD) is interaction with target base in tRNA. C103 (nucleophile) is an active-site residue. C103 and C200 are oxidised to a cystine. G127 contacts ATP. An interaction with tRNA region spans residues 150–152 (KDQ). C200 (cysteine persulfide intermediate) is an active-site residue. Residues 312 to 313 (RY) are interaction with tRNA.

It belongs to the MnmA/TRMU family.

It is found in the cytoplasm. The enzyme catalyses S-sulfanyl-L-cysteinyl-[protein] + uridine(34) in tRNA + AH2 + ATP = 2-thiouridine(34) in tRNA + L-cysteinyl-[protein] + A + AMP + diphosphate + H(+). Catalyzes the 2-thiolation of uridine at the wobble position (U34) of tRNA, leading to the formation of s(2)U34. This Streptococcus pneumoniae (strain Hungary19A-6) protein is tRNA-specific 2-thiouridylase MnmA.